The chain runs to 94 residues: Phosphoribosyl-ATP pyrophosphatase (94 aa).

Belongs to the PRA-PH family.

The protein resides in the cytoplasm. The enzyme catalyses 1-(5-phospho-beta-D-ribosyl)-ATP + H2O = 1-(5-phospho-beta-D-ribosyl)-5'-AMP + diphosphate + H(+). It participates in amino-acid biosynthesis; L-histidine biosynthesis; L-histidine from 5-phospho-alpha-D-ribose 1-diphosphate: step 2/9. The chain is Phosphoribosyl-ATP pyrophosphatase from Saccharolobus islandicus (strain M.16.27) (Sulfolobus islandicus).